The chain runs to 187 residues: Elongation factor P (187 aa).

This sequence belongs to the elongation factor P family.

The protein localises to the cytoplasm. The protein operates within protein biosynthesis; polypeptide chain elongation. Involved in peptide bond synthesis. Stimulates efficient translation and peptide-bond synthesis on native or reconstituted 70S ribosomes in vitro. Probably functions indirectly by altering the affinity of the ribosome for aminoacyl-tRNA, thus increasing their reactivity as acceptors for peptidyl transferase. The protein is Elongation factor P of Helicobacter pylori (strain G27).